Consider the following 993-residue polypeptide: Desmoglein-3 (993 aa).

Positions 1–23 (MTWLLFRTSGALAILMVLILVHG) are cleaved as a signal peptide. Positions 24–48 (ELRIETKGQHGEDETAIQGRRRYKR) are excised as a propeptide. 4 consecutive Cadherin domains span residues 48–156 (REWV…APVF), 157–266 (SQSI…FPMF), 267–386 (KESQ…HPAS), and 383–494 (HPAS…CPTV). At 49–617 (EWVKFAKPCR…GKRPSGRLGS (569 aa)) the chain is on the extracellular side. Asparagine 109 and asparagine 179 each carry an N-linked (GlcNAc...) asparagine glycan. N-linked (GlcNAc...) asparagine glycans are attached at residues asparagine 458 and asparagine 544. A helical transmembrane segment spans residues 618–638 (AAIGLLLLGLLLLLLAPLLLL). Residues 639-993 (TCDYGVGPIG…CTEDPCSRLI (355 aa)) are Cytoplasmic-facing. Residues 641-713 (DYGVGPIGGV…NTYAGGTVVE (73 aa)) are required for interaction with CTNND1 and localization at cell-cell junctions. 2 Desmoglein repeat repeats span residues 903-929 (LSAS…MVTE) and 930-960 (TYSA…ERVI).

As to quaternary structure, homodimer. Part of a complex that contains DSG3, PKP1, YAP1 and YWHAG; the complex is required for localization of DSG3 and YAP1 to the cell membrane in keratinocytes. Interacts with PKP2. Interacts with CTNND1; the interaction facilitates DSG3 localization and retention at cell-cell junctions. Interacts with CDH1; the interaction is required for CDH1 localization to developing adherens junctions. Interacts with RAC1; the interaction is required for DSG3 translocation to cell-cell junctions, organization of cortical F-actin bundles and actin anchoring at cell-cell junctions. Interacts with DSC3; the interaction may limit the interaction of DSC3 with p38MAPK family members and therefore repress p38MAPK signaling activation.

The protein localises to the cell membrane. Its subcellular location is the cell junction. It is found in the desmosome. The protein resides in the cytoplasm. It localises to the tight junction. In terms of biological role, a component of desmosome cell-cell junctions which are required for positive regulation of cellular adhesion. Required for adherens and desmosome junction assembly in response to mechanical force in keratinocytes. Required for desmosome-mediated cell-cell adhesion of cells surrounding the telogen hair club and the basal layer of the outer root sheath epithelium, consequently is essential for the anchoring of telogen hairs in the hair follicle. Required for the maintenance of the epithelial barrier via promoting desmosome-mediated intercellular attachment of suprabasal epithelium to basal cells. May play a role in the protein stability of the desmosome plaque components DSP, JUP, PKP1, PKP2 and PKP3. Required for YAP1 localization at the plasma membrane in keratinocytes in response to mechanical strain, via the formation of an interaction complex composed of DSG3, PKP1 and YWHAG. May also be involved in the positive regulation of YAP1 target gene transcription and as a result cell proliferation. Positively regulates cellular contractility and cell junction formation via organization of cortical F-actin bundles and anchoring of actin to tight junctions, in conjunction with RAC1. The cytoplasmic pool of DSG3 is required for the localization of CDH1 and CTNNB1 at developing adherens junctions, potentially via modulation of SRC activity. Inhibits keratinocyte migration via suppression of p38MAPK signaling, may therefore play a role in moderating wound healing. The sequence is that of Desmoglein-3 (DSG3) from Canis lupus familiaris (Dog).